Consider the following 61-residue polypeptide: Sec-independent protein translocase protein TatA (61 aa).

A helical membrane pass occupies residues 1-21 (MFGIGMPEMLIILVIILIIFG).

The protein belongs to the TatA/E family. In terms of assembly, the Tat system comprises two distinct complexes: a TatABC complex, containing multiple copies of TatA, TatB and TatC subunits, and a separate TatA complex, containing only TatA subunits. Substrates initially bind to the TatABC complex, which probably triggers association of the separate TatA complex to form the active translocon.

The protein resides in the cell inner membrane. Its function is as follows. Part of the twin-arginine translocation (Tat) system that transports large folded proteins containing a characteristic twin-arginine motif in their signal peptide across membranes. TatA could form the protein-conducting channel of the Tat system. The sequence is that of Sec-independent protein translocase protein TatA from Syntrophus aciditrophicus (strain SB).